A 93-amino-acid chain; its full sequence is Putative membrane protein insertion efficiency factor (93 aa).

Belongs to the UPF0161 family.

Its subcellular location is the cell inner membrane. Functionally, could be involved in insertion of integral membrane proteins into the membrane. The chain is Putative membrane protein insertion efficiency factor from Cupriavidus taiwanensis (strain DSM 17343 / BCRC 17206 / CCUG 44338 / CIP 107171 / LMG 19424 / R1) (Ralstonia taiwanensis (strain LMG 19424)).